The following is a 281-amino-acid chain: sn-glycerol-3-phosphate transport system permease protein UgpE (281 aa).

The next 6 membrane-spanning stretches (helical) occupy residues 16–36 (LILG…AATL), 85–105 (FSIT…IVWF), 113–133 (FFWM…FPTV), 142–162 (LDSY…TFLF), 202–222 (ALFV…LLII), and 247–267 (WNQV…IVLA). Residues 77–268 (MLNSFIMAFS…IPPVVIVLAM (192 aa)) enclose the ABC transmembrane type-1 domain.

The protein belongs to the binding-protein-dependent transport system permease family. UgpAE subfamily. As to quaternary structure, the complex is composed of two ATP-binding proteins (UgpC), two transmembrane proteins (UgpA and UgpE) and a solute-binding protein (UgpB).

It localises to the cell inner membrane. Its function is as follows. Part of the ABC transporter complex UgpBAEC involved in sn-glycerol-3-phosphate (G3P) import. Probably responsible for the translocation of the substrate across the membrane. The polypeptide is sn-glycerol-3-phosphate transport system permease protein UgpE (ugpE) (Salmonella choleraesuis (strain SC-B67)).